Here is a 288-residue protein sequence, read N- to C-terminus: MWDLREKFERDGFVVVENVFNDQEIDEMKKSISKIVNDMDLAEHPKSVFSTYDEDKHAADSYFLNSSDKIRFFFEEGAVDKDGELTVPKDKALNKIGHGLHFLDPTFEKMTFNSKIQNIFKEIGYQEPGVVQSMYIFKQPKIGGAVTDHVDSTFLRVDPIDHLTGVWIAIDEASVENGCLSFIPGSHKDTSSANYRFVRTHDTSGGALLKFIGTRPTYDQSKFQHVPISKGSLILIHGLVVHKSEANTSEKSRHAYTIHVMERKNTKWSEQNWLQETENYKFPDLYKD.

2-oxoglutarate is bound by residues Lys-95, Met-134, 149–151, and Trp-167; that span reads HVD. Fe cation contacts are provided by His-149 and Asp-151. Residue His-242 participates in Fe cation binding. The 2-oxoglutarate site is built by Ser-244 and Arg-253.

Belongs to the PhyH family. PHYHD1 subfamily. It depends on Fe cation as a cofactor.

Has alpha-ketoglutarate-dependent dioxygenase activity. Does not show detectable activity towards fatty acid CoA thioesters. Is not expected to be active with phytanoyl CoA. The protein is Phytanoyl-CoA dioxygenase domain-containing protein 1 homolog of Caenorhabditis elegans.